Consider the following 496-residue polypeptide: MRALRRLIQGRILLLTICAAGIGGTFQFGYNLSIINAPTLHIQEFTNETWQARTGEPLPDHLVLLMWSLIVSLYPLGGLFGALLAGPLAITLGRKKSLLVNNIFVVSAAILFGFSRKAGSFEMIMLGRLLVGVNAGVSMNIQPMYLGESAPKELRGAVAMSSAIFTALGIVMGQVVGLRELLGGPQAWPLLLASCLVPGALQLASLPLLPESPRYLLIDCGDTEACLAALRRLRGSGDLAGELEELEEERAACQGCRARRPWELFQHRALRRQVTSLVVLGSAMELCGNDSVYAYASSVFRKAGVPEAKIQYAIIGTGSCELLTAVVSCVVIERVGRRVLLIGGYSLMTCWGSIFTVALCLQSSFPWTLYLAMACIFAFILSFGIGPAGVTGILATELFDQMARPAACMVCGALMWIMLILVGLGFPFIMEALSHFLYVPFLGVCVCGAIYTGLFLPETKGKTFQEISKELHRLNFPRRAQGPTWRSLEVIQSTEL.

The Cytoplasmic segment spans residues 1 to 11; the sequence is MRALRRLIQGR. The helical transmembrane segment at 12 to 32 threads the bilayer; the sequence is ILLLTICAAGIGGTFQFGYNL. At 33–61 the chain is on the extracellular side; it reads SIINAPTLHIQEFTNETWQARTGEPLPDH. The N-linked (GlcNAc...) asparagine glycan is linked to Asn-47. A helical membrane pass occupies residues 62-82; sequence LVLLMWSLIVSLYPLGGLFGA. Residues 83-97 lie on the Cytoplasmic side of the membrane; that stretch reads LLAGPLAITLGRKKS. Residues 98–118 traverse the membrane as a helical segment; it reads LLVNNIFVVSAAILFGFSRKA. The Extracellular portion of the chain corresponds to 119-128; the sequence is GSFEMIMLGR. A helical transmembrane segment spans residues 129 to 149; that stretch reads LLVGVNAGVSMNIQPMYLGES. Over 150-157 the chain is Cytoplasmic; that stretch reads APKELRGA. The helical transmembrane segment at 158–178 threads the bilayer; sequence VAMSSAIFTALGIVMGQVVGL. Residues 179–187 are Extracellular-facing; it reads RELLGGPQA. The chain crosses the membrane as a helical span at residues 188–208; sequence WPLLLASCLVPGALQLASLPL. Over 209 to 273 the chain is Cytoplasmic; the sequence is LPESPRYLLI…LFQHRALRRQ (65 aa). Residues 274 to 294 traverse the membrane as a helical segment; the sequence is VTSLVVLGSAMELCGNDSVYA. Residues 295-311 lie on the Extracellular side of the membrane; sequence YASSVFRKAGVPEAKIQ. Residues 312–332 traverse the membrane as a helical segment; that stretch reads YAIIGTGSCELLTAVVSCVVI. Over 333-338 the chain is Cytoplasmic; that stretch reads ERVGRR. The chain crosses the membrane as a helical span at residues 339-359; that stretch reads VLLIGGYSLMTCWGSIFTVAL. Residues 360–364 lie on the Extracellular side of the membrane; sequence CLQSS. Residues 365–385 traverse the membrane as a helical segment; the sequence is FPWTLYLAMACIFAFILSFGI. The Cytoplasmic segment spans residues 386–408; it reads GPAGVTGILATELFDQMARPAAC. The chain crosses the membrane as a helical span at residues 409 to 429; it reads MVCGALMWIMLILVGLGFPFI. The Extracellular portion of the chain corresponds to 430–435; that stretch reads MEALSH. The helical transmembrane segment at 436–456 threads the bilayer; the sequence is FLYVPFLGVCVCGAIYTGLFL. Topologically, residues 457–496 are cytoplasmic; it reads PETKGKTFQEISKELHRLNFPRRAQGPTWRSLEVIQSTEL.

Belongs to the major facilitator superfamily. Sugar transporter (TC 2.A.1.1) family. Glucose transporter subfamily. In terms of tissue distribution, expressed in heart and skeletal muscle.

The protein localises to the cell membrane. It carries out the reaction D-glucose(out) = D-glucose(in). Functionally, facilitative glucose transporter. This chain is Solute carrier family 2, facilitated glucose transporter member 11, found in Homo sapiens (Human).